Reading from the N-terminus, the 597-residue chain is Histidine protein kinase DivJ (597 aa).

Helical transmembrane passes span 40-57 (LGWLAAVCLAAAAALFTA), 62-81 (WPVWAALGAGALPALVSLIF), 91-109 (WLLVLWAVGGSLAAVLTGG), 110-125 (VGGAMAAWCLAPVAAA), 137-158 (GAALALIGACVAALTQLSGLAP), and 159-188 (AAPTGPLAFVLGFLALVTTGLGLAAGLLIG). The 219-residue stretch at 335-553 (NMSHELRTPL…TVSVRLPVLL (219 aa)) folds into the Histidine kinase domain. At H338 the chain carries Phosphohistidine; by autocatalysis. Over residues 561-585 (PTPPAAPEAPSAPEPAPTVEEPPPA) the composition is skewed to pro residues. Residues 561 to 597 (PTPPAAPEAPSAPEPAPTVEEPPPASLGDNVIAFAPR) are disordered.

The protein resides in the cell membrane. It catalyses the reaction ATP + protein L-histidine = ADP + protein N-phospho-L-histidine.. Kinase required for the regulation of cell division and differentiation. Is part of a signal transduction pathway, activating PleD by phosphorylation. This is Histidine protein kinase DivJ (divJ) from Caulobacter vibrioides (strain ATCC 19089 / CIP 103742 / CB 15) (Caulobacter crescentus).